We begin with the raw amino-acid sequence, 197 residues long: Imidazoleglycerol-phosphate dehydratase (197 aa).

The protein belongs to the imidazoleglycerol-phosphate dehydratase family.

The protein resides in the cytoplasm. It catalyses the reaction D-erythro-1-(imidazol-4-yl)glycerol 3-phosphate = 3-(imidazol-4-yl)-2-oxopropyl phosphate + H2O. It functions in the pathway amino-acid biosynthesis; L-histidine biosynthesis; L-histidine from 5-phospho-alpha-D-ribose 1-diphosphate: step 6/9. This Nitrobacter hamburgensis (strain DSM 10229 / NCIMB 13809 / X14) protein is Imidazoleglycerol-phosphate dehydratase.